We begin with the raw amino-acid sequence, 270 residues long: Imidazole glycerol phosphate synthase subunit HisF (270 aa).

Active-site residues include D11 and D135.

Belongs to the HisA/HisF family. As to quaternary structure, heterodimer of HisH and HisF.

Its subcellular location is the cytoplasm. It carries out the reaction 5-[(5-phospho-1-deoxy-D-ribulos-1-ylimino)methylamino]-1-(5-phospho-beta-D-ribosyl)imidazole-4-carboxamide + L-glutamine = D-erythro-1-(imidazol-4-yl)glycerol 3-phosphate + 5-amino-1-(5-phospho-beta-D-ribosyl)imidazole-4-carboxamide + L-glutamate + H(+). It participates in amino-acid biosynthesis; L-histidine biosynthesis; L-histidine from 5-phospho-alpha-D-ribose 1-diphosphate: step 5/9. IGPS catalyzes the conversion of PRFAR and glutamine to IGP, AICAR and glutamate. The HisF subunit catalyzes the cyclization activity that produces IGP and AICAR from PRFAR using the ammonia provided by the HisH subunit. In Haloquadratum walsbyi (strain DSM 16790 / HBSQ001), this protein is Imidazole glycerol phosphate synthase subunit HisF.